The sequence spans 297 residues: MEEIQVTFLNMLKVERNFSAHTLKSYHDDLVQFNHFLEQELINLRTFEYKDARNYLSYLYSQNLKRTTVSRKISTLRTFYEFWMTQDETIINPFVQLVHPKKENYLPQFFYEEEMEALFETVAKDTKKGLRDRVILELLYATGIRVSELVNIQLKDIDMSLPGVKVLGKGNKERFVPFGEFCRQSIEQYLREFKPIQHTKHSFLLVNMNGAPITERGVRYVLNDVVKRTAGVTEIHPHKLRHTFATHLLNQGADLRTVQSLLGHVNLSTTGRYTHVSNQQLRKVYLNAHPRAKKESK.

Residues Met1–Met84 form the Core-binding (CB) domain. The 182-residue stretch at Tyr105–Leu286 folds into the Tyr recombinase domain. Active-site residues include Arg145, Lys169, His238, Arg241, and His264. Tyr273 functions as the O-(3'-phospho-DNA)-tyrosine intermediate in the catalytic mechanism.

Belongs to the 'phage' integrase family. XerC subfamily. As to quaternary structure, forms a cyclic heterotetrameric complex composed of two molecules of XerC and two molecules of XerD.

Its subcellular location is the cytoplasm. Functionally, site-specific tyrosine recombinase, which acts by catalyzing the cutting and rejoining of the recombining DNA molecules. The XerC-XerD complex is essential to convert dimers of the bacterial chromosome into monomers to permit their segregation at cell division. It also contributes to the segregational stability of plasmids. In Staphylococcus haemolyticus (strain JCSC1435), this protein is Tyrosine recombinase XerC.